Consider the following 320-residue polypeptide: Ribonuclease Z (320 aa).

The Zn(2+) site is built by histidine 62, histidine 64, aspartate 66, histidine 67, histidine 139, aspartate 210, and histidine 268. The active-site Proton acceptor is the aspartate 66.

The protein belongs to the RNase Z family. In terms of assembly, homodimer. Zn(2+) serves as cofactor.

It carries out the reaction Endonucleolytic cleavage of RNA, removing extra 3' nucleotides from tRNA precursor, generating 3' termini of tRNAs. A 3'-hydroxy group is left at the tRNA terminus and a 5'-phosphoryl group is left at the trailer molecule.. Functionally, zinc phosphodiesterase, which displays some tRNA 3'-processing endonuclease activity. Probably involved in tRNA maturation, by removing a 3'-trailer from precursor tRNA. The protein is Ribonuclease Z of Cyanothece sp. (strain PCC 7425 / ATCC 29141).